The sequence spans 127 residues: Holo-[acyl-carrier-protein] synthase (127 aa).

Aspartate 9 and glutamate 58 together coordinate Mg(2+).

This sequence belongs to the P-Pant transferase superfamily. AcpS family. The cofactor is Mg(2+).

It localises to the cytoplasm. The catalysed reaction is apo-[ACP] + CoA = holo-[ACP] + adenosine 3',5'-bisphosphate + H(+). Transfers the 4'-phosphopantetheine moiety from coenzyme A to a Ser of acyl-carrier-protein. In Shewanella sp. (strain MR-7), this protein is Holo-[acyl-carrier-protein] synthase.